Reading from the N-terminus, the 1135-residue chain is uncharacterized protein (1135 aa).

Residues 1-28 form the signal peptide; it reads MALFPRGILIALVLSFVLNLGLVTKIHA. A run of 7 helical transmembrane segments spans residues 332–352, 359–379, 393–413, 495–515, 522–542, 555–575, and 700–720; these read IVTA…LLAG, EYIN…GINI, MIQW…NWVM, MLVS…AFMV, MISI…FLFA, MISF…MFAV, and IKNI…MYNF.

It belongs to the TrbL/VirB6 family.

Its subcellular location is the cell membrane. This is an uncharacterized protein from Rickettsia typhi (strain ATCC VR-144 / Wilmington).